Here is a 538-residue protein sequence, read N- to C-terminus: Pentachlorophenol 4-monooxygenase (538 aa).

Residues 16-45 and 288-298 each bind FAD; these read AVLIVGGGPTGLIAANELLRRGVSCRMIDR and YRKGNVFLAGD.

The protein belongs to the PheA/TfdB FAD monooxygenase family. Homodimer. FAD is required as a cofactor.

It catalyses the reaction pentachlorophenol + NADPH + O2 + H(+) = 2,3,5,6-tetrachloro-1,4-benzoquinone + chloride + NADP(+) + H2O. It carries out the reaction 2,3,5,6-tetrachlorophenol + NADPH + O2 = 2,3,5,6-tetrachlorohydroquinone + NADP(+) + H2O. Its pathway is xenobiotic degradation; pentachlorophenol degradation. Its function is as follows. Dechlorination of pentachlorophenol to tetrachlorobenzoquinone. Also removes hydrogen and nitro, amino, and cyano groups from benzene ring at the para position in relation to the hydroxyl of phenol. This chain is Pentachlorophenol 4-monooxygenase (pcpB), found in Sphingobium chlorophenolicum.